Here is a 61-residue protein sequence, read N- to C-terminus: UPF0434 protein TM1040_0056 (61 aa).

This sequence belongs to the UPF0434 family.

The sequence is that of UPF0434 protein TM1040_0056 from Ruegeria sp. (strain TM1040) (Silicibacter sp.).